A 346-amino-acid chain; its full sequence is Protein Rae1 (346 aa).

4 WD repeats span residues 17-61 (ASPP…ATVP), 64-105 (MKTM…VMQV), 126-148 (LMTGSWDKTLKFWDTRSPNPMMT), and 255-289 (VNDIAFHPVHGTLVTVGSDGTFSFWDKDARTKLKS).

It belongs to the WD repeat rae1 family. In terms of assembly, interacts with hiw; the interaction with Rae1 may protect hiw from autophagy-mediated degradation. Interacts with Nup98-96. In terms of tissue distribution, head (at protein level).

The protein resides in the cytoplasm. The protein localises to the perinuclear region. It localises to the nucleus. It is found in the nucleus envelope. Its subcellular location is the chromosome. In terms of biological role, probable component of the nuclear pore complex (NPC) which regulates the nuclear export of specific mRNAs and promotes cell cycle progression during mitosis and male meiosis. Acts with Nup98-96 to promote the nuclear export of specific mRNAs such as Moe, however it does not appear to be required for general nuclear mRNA transport. Essential mitotic and male meiotic cell cycle regulator with roles in many aspects of the cell cycle including chromatin organization and condensation, spindle assembly, chromosome segregation, and maintaining nuclear structure. During male meiosis it is required for completion of meiosis I, as well as accurate cytokinesis of the secondary spermatocytes, and postmeiotic differentiation of spermatids. Acts as a downstream regulatory target of the Hippo/SWH (Sav/Wts/Hpo) signaling pathway to promote mitotic cell cycle progression and proliferation during wing and eye development, and thereby plays a key role in integrating the regulation of proliferation with organ size control. When the Hippo/SWH signaling pathway is inactive, Rae1 acts independently of yki to increase organ size by promoting mitotic S-phase entry and increase cellular proliferation. When the Hippo/SWH signaling pathway is active it inhibits the activity of Rae1 in a Wts-dependent manner to restrict organ growth. However, Rae1 is also able to negatively regulate the levels and activity of yki likely by activating the core kinases of the Hippo/SWH signaling pathway hpo and Wts and increasing the protein levels of hpo, Mer and Wts; it is therefore likely that it functions as part of a negative feedback loop with the Hippo/SWH signaling pathway to regulate pathway homeostasis and prevent organ overgrowth. Promotes mitotic cell cycle progression, at least in part, by increasing the accumulation of mitotic cyclins such as CycB, possibly by directly up-regulating cyclin transcripts or by inhibiting the anaphase promoting complex/cyclosome (APC/C) activator fzy. Also required in presynaptic, postmitotic motor neurons to restrain synaptic terminal growth. Promotes the expression and stability of the an E3 ubiquitin ligase of hiw, and is likely to function in the regulation of synaptic growth by binding to hiw and protecting it from autophagy-mediated degradation. This Drosophila melanogaster (Fruit fly) protein is Protein Rae1.